The sequence spans 1021 residues: Ephrin type-B receptor 6 (1021 aa).

An N-terminal signal peptide occupies residues 1-31 (MATEGAAQLGNRVAGMVCSLWVLLLVSSVLA). The Extracellular segment spans residues 32-594 (LEEVLLDTTG…LSSQLPERLS (563 aa)). Positions 33–237 (EEVLLDTTGE…FSYTCPAVLR (205 aa)) constitute an Eph LBD domain. The disordered stretch occupies residues 163-182 (SFPSSSSSSSSSSSAAWAVG). Residues 166-176 (SSSSSSSSSSS) show a composition bias toward low complexity. Fibronectin type-III domains lie at 369–486 (PPSA…TSHE) and 487–582 (VPSA…TLPQ). N-linked (GlcNAc...) asparagine glycosylation is present at Asn480. A helical transmembrane segment spans residues 595–615 (LVIGSILGALAFLLLAAITVL). The Cytoplasmic portion of the chain corresponds to 616–1021 (AVVFQRKRRG…HLRQQGSVEV (406 aa)). The Protein kinase domain occupies 670–919 (IKIEEVIGTG…QLVAAFDKMI (250 aa)). ATP is bound at residue 676–684 (IGTGSFGEV). The region spanning 948 to 1012 (PCLDSPQAWL…LHHIQLLQQH (65 aa)) is the SAM domain. The PDZ-binding motif lies at 1019 to 1021 (VEV).

This sequence belongs to the protein kinase superfamily. Tyr protein kinase family. Ephrin receptor subfamily. As to quaternary structure, interacts with CBL and EPHB1. Interacts with FYN; this interaction takes place in a ligand-independent manner. In terms of processing, ligand-binding increases phosphorylation on tyrosine residues. Phosphorylation on tyrosine residues is mediated by transphosphorylation by the catalytically active EPHB1 in a ligand-independent manner. Tyrosine phosphorylation of the receptor may act as a switch on the functional transition from cell adhesion/attraction to de-adhesion/repulsion. Expressed in brain. Expressed in non invasive breast carcinoma cell lines (at protein level). Strong expression in brain and pancreas, and weak expression in other tissues, such as heart, placenta, lung, liver, skeletal muscle and kidney. Expressed in breast non invasive tumors but not in metastatic lesions. Isoform 3 is expressed in cell lines of glioblastomas, anaplastic astrocytomas, gliosarcomas and astrocytomas. Isoform 3 is not detected in normal tissues.

Its subcellular location is the membrane. The protein resides in the secreted. Kinase-defective receptor for members of the ephrin-B family. Binds to ephrin-B1 and ephrin-B2. Modulates cell adhesion and migration by exerting both positive and negative effects upon stimulation with ephrin-B2. Inhibits JNK activation, T-cell receptor-induced IL-2 secretion and CD25 expression upon stimulation with ephrin-B2. The protein is Ephrin type-B receptor 6 (EPHB6) of Homo sapiens (Human).